The primary structure comprises 345 residues: tRNA N6-adenosine threonylcarbamoyltransferase (345 aa).

2 residues coordinate Fe cation: H117 and H121. Residues 140-144, D173, G186, and N279 contribute to the substrate site; that span reads LVSGG. Residue D307 participates in Fe cation binding.

Belongs to the KAE1 / TsaD family. It depends on Fe(2+) as a cofactor.

Its subcellular location is the cytoplasm. It catalyses the reaction L-threonylcarbamoyladenylate + adenosine(37) in tRNA = N(6)-L-threonylcarbamoyladenosine(37) in tRNA + AMP + H(+). Functionally, required for the formation of a threonylcarbamoyl group on adenosine at position 37 (t(6)A37) in tRNAs that read codons beginning with adenine. Is involved in the transfer of the threonylcarbamoyl moiety of threonylcarbamoyl-AMP (TC-AMP) to the N6 group of A37, together with TsaE and TsaB. TsaD likely plays a direct catalytic role in this reaction. The sequence is that of tRNA N6-adenosine threonylcarbamoyltransferase from Verminephrobacter eiseniae (strain EF01-2).